The chain runs to 618 residues: DNA mismatch repair protein MutL (618 aa).

This sequence belongs to the DNA mismatch repair MutL/HexB family.

Its function is as follows. This protein is involved in the repair of mismatches in DNA. It is required for dam-dependent methyl-directed DNA mismatch repair. May act as a 'molecular matchmaker', a protein that promotes the formation of a stable complex between two or more DNA-binding proteins in an ATP-dependent manner without itself being part of a final effector complex. This Bradyrhizobium sp. (strain BTAi1 / ATCC BAA-1182) protein is DNA mismatch repair protein MutL.